A 469-amino-acid chain; its full sequence is 3-isopropylmalate dehydratase large subunit (469 aa).

Residues C348, C409, and C412 each coordinate [4Fe-4S] cluster.

The protein belongs to the aconitase/IPM isomerase family. LeuC type 1 subfamily. In terms of assembly, heterodimer of LeuC and LeuD. The cofactor is [4Fe-4S] cluster.

The catalysed reaction is (2R,3S)-3-isopropylmalate = (2S)-2-isopropylmalate. It participates in amino-acid biosynthesis; L-leucine biosynthesis; L-leucine from 3-methyl-2-oxobutanoate: step 2/4. Functionally, catalyzes the isomerization between 2-isopropylmalate and 3-isopropylmalate, via the formation of 2-isopropylmaleate. The sequence is that of 3-isopropylmalate dehydratase large subunit from Nitrosococcus oceani (strain ATCC 19707 / BCRC 17464 / JCM 30415 / NCIMB 11848 / C-107).